Here is a 352-residue protein sequence, read N- to C-terminus: Ion-translocating oxidoreductase complex subunit D (352 aa).

A run of 5 helical transmembrane segments spans residues 20–40 (IMLLVLLAAVPGIAAQLWFFG), 42–62 (GTLVQILLASVSALLAEALVL), 78–109 (ALLTGLLLAVSIPPLAPWWMVVLGTVFAVIIA), 123–143 (PAMIGYVVLLISFPVQMTSWL), and 148–168 (IAVNIPGFIDAIQVIFSGHTA). The residue at position 187 (Thr-187) is an FMN phosphoryl threonine. 5 consecutive transmembrane segments (helical) span residues 214–234 (ILAGAGWQWVNLAWLAGGLWL), 242–262 (WHIPLSFLVTLALCATLGWLF), 267–287 (LAAPQIHLLSGATMLGAFFIL), 301–321 (LIFGALAGLLVWLIRSFGGYP), and 322–342 (DGVAFAVLLANITVPLIDYYT).

It belongs to the NqrB/RnfD family. In terms of assembly, the complex is composed of six subunits: RsxA, RsxB, RsxC, RsxD, RsxE and RsxG. The cofactor is FMN.

Its subcellular location is the cell inner membrane. In terms of biological role, part of a membrane-bound complex that couples electron transfer with translocation of ions across the membrane. Required to maintain the reduced state of SoxR. The protein is Ion-translocating oxidoreductase complex subunit D of Escherichia coli (strain SE11).